We begin with the raw amino-acid sequence, 337 residues long: F-box protein At2g27310 (337 aa).

Positions 10-58 (DSISTLHSDIIQTQILTRLDGPTLASTATTSSYLQTLCTEEKLWQELSI) constitute an F-box domain.

This chain is F-box protein At2g27310, found in Arabidopsis thaliana (Mouse-ear cress).